A 533-amino-acid chain; its full sequence is Calcineurin-interacting protein 3 (533 aa).

Disordered regions lie at residues 1-30 (MRSL…NMDI), 53-85 (PRKQ…YTKR), and 359-404 (MDMS…LTLP). Positions 61-85 (KRAEPVSEEHRKKESSKNSREYTKR) are enriched in basic and acidic residues. The segment covering 359 to 372 (MDMSQTLSPEQTLS) has biased composition (polar residues). Basic and acidic residues predominate over residues 373-384 (PREKLQVQDRKI).

It is found in the nucleus. The protein is Calcineurin-interacting protein 3 of Caenorhabditis elegans.